A 41-amino-acid polypeptide reads, in one-letter code: Photosystem I reaction center subunit IX (41 aa).

The helical transmembrane segment at Tyr-7–Ile-27 threads the bilayer.

Belongs to the PsaJ family.

The protein resides in the cellular thylakoid membrane. Functionally, may help in the organization of the PsaE and PsaF subunits. The protein is Photosystem I reaction center subunit IX of Cyanothece sp. (strain PCC 7425 / ATCC 29141).